The following is a 259-amino-acid chain: Tumor necrosis factor receptor superfamily member 10C (259 aa).

Positions 1–25 (MARIPKTLKFVVVIVAVLLPVLAYS) are cleaved as a signal peptide. TNFR-Cys repeat units follow at residues 29-66 (ARQE…TGAC), 69-109 (CTEG…DTVC), and 110-149 (QCKE…DIQC). The span at 30–45 (RQEEVPQQTVAPQQQR) shows a compositional bias: polar residues. The disordered stretch occupies residues 30–56 (RQEEVPQQTVAPQQQRHSFKGEECPAG). Intrachain disulfides connect Cys-53-Cys-66, Cys-69-Cys-85, Cys-88-Cys-101, Cys-91-Cys-109, Cys-111-Cys-125, Cys-128-Cys-141, and Cys-131-Cys-149. N-linked (GlcNAc...) (high mannose) asparagine glycosylation occurs at Asn-77. Asn-140 and Asn-156 each carry an N-linked (GlcNAc...) (high mannose) asparagine glycan. Residues 160–224 (ETPAAEETMN…TSPGTPAPAA (65 aa)) form a disordered region. TAPE repeat units lie at residues 162–176 (PAAE…GTPA), 177–191 (PAAE…GTPA), 192–206 (PAAE…GTPA), 207–221 (PAAE…GTPA), and 222–236 (PAAE…GTPA). Over residues 185–217 (TSPGTPAPAAEETMTTSPGTPAPAAEETMTTSP) the composition is skewed to low complexity. Ala-236 is lipidated: GPI-anchor amidated alanine. A propeptide spans 237–259 (SSHYLSCTIVGIIVLIVLLIVFV) (removed in mature form).

In terms of processing, N-glycosylated and O-glycosylated. In terms of tissue distribution, higher expression in normal tissues than in tumor cell lines. Highly expressed in peripheral blood lymphocytes, spleen, skeletal muscle, placenta, lung and heart.

It is found in the cell membrane. Receptor for the cytotoxic ligand TRAIL. Lacks a cytoplasmic death domain and hence is not capable of inducing apoptosis. May protect cells against TRAIL mediated apoptosis by competing with TRAIL-R1 and R2 for binding to the ligand. The protein is Tumor necrosis factor receptor superfamily member 10C (TNFRSF10C) of Homo sapiens (Human).